The sequence spans 1352 residues: Ubiquitin carboxyl-terminal hydrolase 31 (1352 aa).

Positions 1–16 (MSKVTAPGSGPPAAAS) are enriched in low complexity. Disordered regions lie at residues 1-62 (MSKV…RSVG) and 79-119 (SSEG…PPAC). Positions 32–43 (RAGGGGAGGPGA) are enriched in gly residues. The span at 44-62 (SGPAAPSSPSSPSSARSVG) shows a compositional bias: low complexity. Over residues 95-117 (PPGPAAAPTPPPCPPPPASPAPP) the composition is skewed to pro residues. A USP domain is found at 128 to 765 (AGLRNHGNTC…TAYILFYQRR (638 aa)). Cys-137 serves as the catalytic Nucleophile. Positions 162–185 (RAGRPEPSPDPEQPAGRGAQGQGE) are disordered. His-723 serves as the catalytic Proton acceptor. Disordered stretches follow at residues 812 to 835 (LASL…FSTR), 919 to 939 (SSSY…AVGR), and 951 to 1352 (DESD…QKPQ). The segment covering 958–970 (LNSSVVDTQSKHS) has biased composition (polar residues). Composition is skewed to low complexity over residues 992–1001 (VDQSDSVDSS), 1051–1070 (SSLS…SLKP), 1078–1089 (DSSSRGSGRHSS), and 1101–1138 (PKSQ…GPAT). Positions 1148-1159 (RTSDHSLSREGS) are enriched in basic and acidic residues. The span at 1160-1181 (RQSLGSDRASATSTSKPNSPRV) shows a compositional bias: polar residues. The span at 1198-1210 (SSSMASLRSPSTS) shows a compositional bias: low complexity. Basic and acidic residues-rich tracts occupy residues 1215-1225 (LKRDSKSEDKG) and 1234-1243 (RQKETRRSTD). Residues 1251-1264 (SKKAGGSSVKSVCK) show a composition bias toward low complexity. The residue at position 1264 (Lys-1264) is an N6-acetyllysine. Polar residues-rich tracts occupy residues 1278 to 1290 (PASQ…TTGK) and 1341 to 1352 (MQTSARPSQKPQ).

It belongs to the peptidase C19 family. Acetylated at Lys-1264. Acetylation decreases activity. Deacetylated by SIRT1. Widely expressed.

The catalysed reaction is Thiol-dependent hydrolysis of ester, thioester, amide, peptide and isopeptide bonds formed by the C-terminal Gly of ubiquitin (a 76-residue protein attached to proteins as an intracellular targeting signal).. Deubiquitinase that recognizes and hydrolyzes the peptide bond at the C-terminal Gly of ubiquitin. May play a role in the regulation of NF-kappa-B signaling pathway by deubiquitinating TRAF2. In terms of biological role, (Microbial infection) Plays a positive role in foot-and-mouth disease and classical swine fever viral infection. Mechanistically, associates with internal ribosomal entry site (IRES) element within the 5'-untranslated region of viral genomes to promote translation of the virus-encoded polyprotein. The protein is Ubiquitin carboxyl-terminal hydrolase 31 (USP31) of Homo sapiens (Human).